Reading from the N-terminus, the 381-residue chain is MESIGIVAPQTMHFAEPLRLQSGSVLGNYQLVVETYGELNAARSNAVLVCHALNASHHVAGVYADDPRSTGWWDNMVGPGKPLDTNRFFVIGVNNLGSCFGSTGPMSIDPSTGKPYGAKFPVVTVEDWVHAQARVADAFGIERFAAVMGGSLGGMQALAWSLMYPERVAHCIDIASTPKLSAQNIAFNEVARSAILSDPDFHGGDYYAHGVKPKRGLRVARMIGHITYLSDDDMAEKFGRALRRADGALDAYNFSFDVEFEVESYLRYQGDKFADYFDANTYLLITRALDYFDPAKAFDGNLTAALAHTQAKYLIASFSTDWRFAPARSREIVKALLDNKRTVSYAEIDAPHGHDAFLLDDARYHNLLRAYYERIANEVGA.

One can recognise an AB hydrolase-1 domain in the interval 45 to 360; it reads NAVLVCHALN…PHGHDAFLLD (316 aa). The Nucleophile role is filled by serine 151. Arginine 221 contributes to the substrate binding site. Residues aspartate 321 and histidine 354 contribute to the active site. A substrate-binding site is contributed by aspartate 355.

Belongs to the AB hydrolase superfamily. MetX family. In terms of assembly, homodimer.

The protein resides in the cytoplasm. It carries out the reaction L-homoserine + succinyl-CoA = O-succinyl-L-homoserine + CoA. Its pathway is amino-acid biosynthesis; L-methionine biosynthesis via de novo pathway; O-succinyl-L-homoserine from L-homoserine: step 1/1. Transfers a succinyl group from succinyl-CoA to L-homoserine, forming succinyl-L-homoserine. The sequence is that of Homoserine O-succinyltransferase from Burkholderia cenocepacia (strain HI2424).